Reading from the N-terminus, the 65-residue chain is Trypsin inhibitor (65 aa).

As to quaternary structure, homotrimer.

This chain is Trypsin inhibitor, found in Zea mays (Maize).